A 274-amino-acid polypeptide reads, in one-letter code: NH(3)-dependent NAD(+) synthetase (274 aa).

46 to 53 (GISGGQDS) is a binding site for ATP. Position 52 (aspartate 52) interacts with Mg(2+). A deamido-NAD(+)-binding site is contributed by arginine 140. ATP is bound at residue threonine 160. Glutamate 165 provides a ligand contact to Mg(2+). Residues lysine 173 and aspartate 180 each contribute to the deamido-NAD(+) site. 2 residues coordinate ATP: lysine 189 and threonine 211. Residue 260 to 261 (HK) coordinates deamido-NAD(+).

This sequence belongs to the NAD synthetase family. In terms of assembly, homodimer.

The enzyme catalyses deamido-NAD(+) + NH4(+) + ATP = AMP + diphosphate + NAD(+) + H(+). It participates in cofactor biosynthesis; NAD(+) biosynthesis; NAD(+) from deamido-NAD(+) (ammonia route): step 1/1. In terms of biological role, catalyzes the ATP-dependent amidation of deamido-NAD to form NAD. Uses ammonia as a nitrogen source. The sequence is that of NH(3)-dependent NAD(+) synthetase from Streptococcus pyogenes serotype M2 (strain MGAS10270).